Here is a 148-residue protein sequence, read N- to C-terminus: UPF0260 protein Spro_2751 (148 aa).

It belongs to the UPF0260 family.

In Serratia proteamaculans (strain 568), this protein is UPF0260 protein Spro_2751.